The sequence spans 368 residues: Phospho-N-acetylmuramoyl-pentapeptide-transferase (368 aa).

The next 9 helical transmembrane spans lie at 30–50 (AAAI…IRYL), 72–92 (LPTM…FLWA), 98–118 (HVWL…IDDY), 139–159 (ISLG…AVLL), 170–190 (LSID…TAVS), 201–221 (GLAS…SYLA), 238–258 (GGEI…FLWF), 264–286 (EIIM…ALLI), and 345–365 (KIVI…LMTL).

This sequence belongs to the glycosyltransferase 4 family. MraY subfamily. Requires Mg(2+) as cofactor.

It is found in the cell inner membrane. The enzyme catalyses UDP-N-acetyl-alpha-D-muramoyl-L-alanyl-gamma-D-glutamyl-meso-2,6-diaminopimeloyl-D-alanyl-D-alanine + di-trans,octa-cis-undecaprenyl phosphate = di-trans,octa-cis-undecaprenyl diphospho-N-acetyl-alpha-D-muramoyl-L-alanyl-D-glutamyl-meso-2,6-diaminopimeloyl-D-alanyl-D-alanine + UMP. Its pathway is cell wall biogenesis; peptidoglycan biosynthesis. Its function is as follows. Catalyzes the initial step of the lipid cycle reactions in the biosynthesis of the cell wall peptidoglycan: transfers peptidoglycan precursor phospho-MurNAc-pentapeptide from UDP-MurNAc-pentapeptide onto the lipid carrier undecaprenyl phosphate, yielding undecaprenyl-pyrophosphoryl-MurNAc-pentapeptide, known as lipid I. The polypeptide is Phospho-N-acetylmuramoyl-pentapeptide-transferase (Chlorobium phaeobacteroides (strain DSM 266 / SMG 266 / 2430)).